Consider the following 524-residue polypeptide: Cytochrome P450 monooxygenase alt1 (524 aa).

Residues 24–44 (IANMLSVIAFSICISPIVYFL) traverse the membrane as a helical segment. Heme is bound at residue Cys-469.

Belongs to the cytochrome P450 family. It depends on heme as a cofactor.

It is found in the membrane. It functions in the pathway secondary metabolite biosynthesis. In terms of biological role, cytochrome P450 monooxygenase; part of the gene cluster that mediates the biosynthesis of alternapyrone derivatives. Alternapyrone is a decaketide with octa-methylation from methionine on every C2 unit except the third unit. All the domains in the polyketide synthase alt5 are apparently involved in alternapyrone synthesis, that is, the 8 CMeT, 7 KR, 7 DH, and 4 ER reactions in the 9 KS-mediated condensation steps required for alternapyrone synthesis. the alternapyrone produced by alt5 might be intensively modified by cytochrome P450 monooxygenases alt1, alt2 and alt3 and FAD-dependent oxidoreductase alt4 present in the alt gene cluster. The polypeptide is Cytochrome P450 monooxygenase alt1 (Alternaria solani).